Here is a 186-residue protein sequence, read N- to C-terminus: MVVVGLGNPGPRYAFTRHNVGFLFLDFLKNKDWKTEKYFAWNKINLAGNEVALVKPLTYMNLSGLAMPHVLKFFSASLDDIIVVYDDVSLKLGKIRIRKKGSDGGHNGMKSIIQALGTQEIKRIRVGIGDKPEGMDLVNFVLGEFSDEEWIILNKVFEVMKEALEVILVEGIEKAMSIYNSLEVRA.

A tRNA-binding site is contributed by Y13. H18 functions as the Proton acceptor in the catalytic mechanism. TRNA is bound by residues Y59, N61, and N107.

This sequence belongs to the PTH family. Monomer.

The protein localises to the cytoplasm. The catalysed reaction is an N-acyl-L-alpha-aminoacyl-tRNA + H2O = an N-acyl-L-amino acid + a tRNA + H(+). In terms of biological role, hydrolyzes ribosome-free peptidyl-tRNAs (with 1 or more amino acids incorporated), which drop off the ribosome during protein synthesis, or as a result of ribosome stalling. Catalyzes the release of premature peptidyl moieties from peptidyl-tRNA molecules trapped in stalled 50S ribosomal subunits, and thus maintains levels of free tRNAs and 50S ribosomes. This chain is Peptidyl-tRNA hydrolase, found in Thermotoga maritima (strain ATCC 43589 / DSM 3109 / JCM 10099 / NBRC 100826 / MSB8).